A 481-amino-acid chain; its full sequence is Pyruvate kinase (481 aa).

Substrate is bound at residue R36. The K(+) site is built by N38, S40, and D70. 38–41 (NFSH) contributes to the ATP binding site. Residues R77 and K160 each contribute to the ATP site. E225 is a Mg(2+) binding site. Positions 251, 252, and 284 each coordinate substrate. Position 252 (D252) interacts with Mg(2+).

Belongs to the pyruvate kinase family. In terms of assembly, homotetramer. Mg(2+) is required as a cofactor. The cofactor is K(+).

It catalyses the reaction pyruvate + ATP = phosphoenolpyruvate + ADP + H(+). It functions in the pathway carbohydrate degradation; glycolysis; pyruvate from D-glyceraldehyde 3-phosphate: step 5/5. Allosterically activated by AMP and by several sugar phosphates. Belongs to type II PK. The sequence is that of Pyruvate kinase (pykA) from Buchnera aphidicola subsp. Schizaphis graminum (strain Sg).